The sequence spans 753 residues: MTIRNHTLGFPRVGLRRELKKAQESYWAGNATREDLLATGRELRARHWDQQKQAGIDLLPVGDFAWYDHVLTTSLLLGNVPARHQNSDGSVDIDTLFRIGRGRAPTGEPAAAAEMTKWFNTNYHYMVPEFVKGQQFKLTWTQLLDEVDEALALGHKVKPVLLGPVTYLWLGKVKGESFDRLSLLNDILPVYKQVLTELAKRGVEWVQIDEPALVLELPQEWLDAYKPAYDALQGQVKLLLTTYFEGVTPNLDTIAALPVQGLHVDLVHGKDDVAELHKRLPSDWLLSAGLVNGRNVWRADLTEKYAQIKDIVGKRDLWVASSCSLLHSPIDLSVETRLDAEVKSWFAFALQKCGELALLRDALNSGDTAKLEAWSAPIQARRHSTRVHNAAVEKRLAAITAQDSQRASPYAARAQAQRNRFNLPSWPTTTIGSFPQTTEIRGLRLDFKKGNLDANHYRTGIAEHIKQAIVEQERLGLDVLVHGEAERNDMVEYFGEHLDGFVFTQNGWVQSYGSRCVKPPVVIGDVSRPEPITVEWAKYAQSLTDKPVKGMLTGPVTILCWSFPREDVSRETIAKQIALALRDEVADLEAAGIGIIQIDEPALREGLPLRRSDWDAYLQWGVEAFRINAAVAKDDTQIHTHMCYCEFNDIMDSIAALDADVITIETSRSDMELLESFEEFEYPNEIGPGVYDIHSPNVPSVEWIEALLNKAAQRIPAERLWVNPDCGLKTRGWPETRAALANMVKAAQNLRQA.

5-methyltetrahydropteroyltri-L-glutamate is bound by residues arginine 17–lysine 20 and lysine 117. L-homocysteine contacts are provided by residues isoleucine 431–serine 433 and glutamate 484. L-methionine is bound by residues isoleucine 431–serine 433 and glutamate 484. Residues arginine 515–cysteine 516 and tryptophan 561 each bind 5-methyltetrahydropteroyltri-L-glutamate. Aspartate 599 contributes to the L-homocysteine binding site. Residue aspartate 599 coordinates L-methionine. Glutamate 605 contacts 5-methyltetrahydropteroyltri-L-glutamate. The Zn(2+) site is built by histidine 641, cysteine 643, and glutamate 665. Histidine 694 functions as the Proton donor in the catalytic mechanism. Residue cysteine 726 participates in Zn(2+) binding.

This sequence belongs to the vitamin-B12 independent methionine synthase family. It depends on Zn(2+) as a cofactor.

The catalysed reaction is 5-methyltetrahydropteroyltri-L-glutamate + L-homocysteine = tetrahydropteroyltri-L-glutamate + L-methionine. It participates in amino-acid biosynthesis; L-methionine biosynthesis via de novo pathway; L-methionine from L-homocysteine (MetE route): step 1/1. Catalyzes the transfer of a methyl group from 5-methyltetrahydrofolate to homocysteine resulting in methionine formation. This is 5-methyltetrahydropteroyltriglutamate--homocysteine methyltransferase from Citrobacter koseri (strain ATCC BAA-895 / CDC 4225-83 / SGSC4696).